The primary structure comprises 173 residues: MAAAEALGAARYFTRWYKADVKGRPCEDFCVLQHSNRICVITLAEAHPLLQPGKTITSINYQISPNCSRLQNKVSGKSKRGAQFLTELAPLCRIASSDGEEYTIYSFIRGRLIEVNENILSNPALLQEKPSTEGYIAVVLPKFEESKSVTQGLLTPEEYKEVLLKRQNSSSGS.

This sequence belongs to the ABITRAM family.

The protein resides in the nucleus speckle. It localises to the cell projection. It is found in the lamellipodium. The protein localises to the nucleus. Its subcellular location is the growth cone. The protein resides in the dendrite. In terms of biological role, actin-binding protein that regulates actin polymerization, filopodia dynamics and increases the branching of proximal dendrites of developing neurons. The protein is Protein Abitram (ABITRAM) of Gallus gallus (Chicken).